A 264-amino-acid chain; its full sequence is Cell division protein FtsQ (264 aa).

Residues 1–24 (MAGPTTAERGARQQESSGPPRVRR) form a disordered region. Topologically, residues 1–32 (MAGPTTAERGARQQESSGPPRVRRFRPPRLRT) are cytoplasmic. Residues 33–53 (IIILAVALVLVAGGTVWVLYG) traverse the membrane as a helical segment. The Extracellular segment spans residues 54–264 (SNWTRLERVS…VATAPASSGS (211 aa)). Residues 57–126 (TRLERVSVSG…HGIGLKVTER (70 aa)) enclose the POTRA domain.

This sequence belongs to the FtsQ/DivIB family. FtsQ subfamily.

The protein localises to the cell membrane. Essential cell division protein. The sequence is that of Cell division protein FtsQ from Streptomyces coelicolor (strain ATCC BAA-471 / A3(2) / M145).